The primary structure comprises 207 residues: GTP-binding protein RHO1 (207 aa).

Residue 18–25 participates in GTP binding; the sequence is GDGACGKT. Positions 40-48 match the Effector region motif; that stretch reads YVPTVFDNY. GTP contacts are provided by residues 65-69 and 123-126; these read DTAGQ and CKAD. Positions 187-207 are disordered; it reads GKQGKSKAKSDKKKKKKCVVL. The span at 190–207 shows a compositional bias: basic residues; sequence GKSKAKSDKKKKKKCVVL. Cysteine methyl ester is present on cysteine 204. Cysteine 204 carries the S-geranylgeranyl cysteine lipid modification. Residues 205–207 constitute a propeptide, removed in mature form; sequence VVL.

This sequence belongs to the small GTPase superfamily. Rho family.

Its subcellular location is the cell membrane. Functionally, involved in the regulation of actin polarization. Rho proteins are required for distinct steps during polarized hyphal growth of A.gossypii. This is GTP-binding protein RHO1 (RHO1) from Eremothecium gossypii (strain ATCC 10895 / CBS 109.51 / FGSC 9923 / NRRL Y-1056) (Yeast).